The chain runs to 150 residues: Cytochrome c oxidase subunit 5A, mitochondrial (150 aa).

The N-terminal 41 residues, 1-41, are a transit peptide targeting the mitochondrion; the sequence is MLGAALRRCAVAATTWAGPRGLLHSARTPGPAAAIQSVRCY. The short motif at 2–20 is the SIFI-degron element; that stretch reads LGAALRRCAVAATTWAGPR. Residues Lys87 and Lys113 each carry the N6-acetyllysine modification. A Phosphothreonine modification is found at Thr141.

Belongs to the cytochrome c oxidase subunit 5A family. Component of the cytochrome c oxidase (complex IV, CIV), a multisubunit enzyme composed of 14 subunits. The complex is composed of a catalytic core of 3 subunits MT-CO1, MT-CO2 and MT-CO3, encoded in the mitochondrial DNA, and 11 supernumerary subunits COX4I, COX5A, COX5B, COX6A, COX6B, COX6C, COX7A, COX7B, COX7C, COX8 and NDUFA4, which are encoded in the nuclear genome. The complex exists as a monomer or a dimer and forms supercomplexes (SCs) in the inner mitochondrial membrane with NADH-ubiquinone oxidoreductase (complex I, CI) and ubiquinol-cytochrome c oxidoreductase (cytochrome b-c1 complex, complex III, CIII), resulting in different assemblies (supercomplex SCI(1)III(2)IV(1) and megacomplex MCI(2)III(2)IV(2)). Interacts with AFG1L. Interacts with RAB5IF. Post-translationally, in response to mitochondrial stress, the precursor protein is ubiquitinated by the SIFI complex in the cytoplasm before mitochondrial import, leading to its degradation. Within the SIFI complex, UBR4 initiates ubiquitin chain that are further elongated or branched by KCMF1.

Its subcellular location is the mitochondrion inner membrane. Its pathway is energy metabolism; oxidative phosphorylation. Its function is as follows. Component of the cytochrome c oxidase, the last enzyme in the mitochondrial electron transport chain which drives oxidative phosphorylation. The respiratory chain contains 3 multisubunit complexes succinate dehydrogenase (complex II, CII), ubiquinol-cytochrome c oxidoreductase (cytochrome b-c1 complex, complex III, CIII) and cytochrome c oxidase (complex IV, CIV), that cooperate to transfer electrons derived from NADH and succinate to molecular oxygen, creating an electrochemical gradient over the inner membrane that drives transmembrane transport and the ATP synthase. Cytochrome c oxidase is the component of the respiratory chain that catalyzes the reduction of oxygen to water. Electrons originating from reduced cytochrome c in the intermembrane space (IMS) are transferred via the dinuclear copper A center (CU(A)) of subunit 2 and heme A of subunit 1 to the active site in subunit 1, a binuclear center (BNC) formed by heme A3 and copper B (CU(B)). The BNC reduces molecular oxygen to 2 water molecules using 4 electrons from cytochrome c in the IMS and 4 protons from the mitochondrial matrix. The polypeptide is Cytochrome c oxidase subunit 5A, mitochondrial (COX5A) (Macaca mulatta (Rhesus macaque)).